Reading from the N-terminus, the 187-residue chain is MADTTFDIDDTERRMRGALQSLKQEFAGLRTGRATASLLEPIVVEAYGQSMPINQVGTIGVPEPRMLTVQVWDKGMISAVEKAIRSSGLGLNPNVDGMLIRLPIPELNQERRAELTKIAAKYTEQARIAVRNVRRDAMDELKRLEKDSHMSQDDHKSWSEKVQKLTDKVIGEIDAALAHKEADIMQV.

Belongs to the RRF family.

The protein resides in the cytoplasm. Responsible for the release of ribosomes from messenger RNA at the termination of protein biosynthesis. May increase the efficiency of translation by recycling ribosomes from one round of translation to another. The protein is Ribosome-recycling factor of Parvibaculum lavamentivorans (strain DS-1 / DSM 13023 / NCIMB 13966).